Reading from the N-terminus, the 385-residue chain is Dual-specificity RNA methyltransferase RlmN (385 aa).

Glu-113 acts as the Proton acceptor in catalysis. Residues 120–352 form the Radical SAM core domain; it reads VGRAGALCVS…NRAGYASPIR (233 aa). A disulfide bridge links Cys-127 with Cys-363. Residues Cys-134, Cys-138, and Cys-141 each coordinate [4Fe-4S] cluster. Residues 189–190, Ser-221, 243–245, and Asn-320 each bind S-adenosyl-L-methionine; these read GE and SLH. Residue Cys-363 is the S-methylcysteine intermediate of the active site.

It belongs to the radical SAM superfamily. RlmN family. Requires [4Fe-4S] cluster as cofactor.

It is found in the cytoplasm. It carries out the reaction adenosine(2503) in 23S rRNA + 2 reduced [2Fe-2S]-[ferredoxin] + 2 S-adenosyl-L-methionine = 2-methyladenosine(2503) in 23S rRNA + 5'-deoxyadenosine + L-methionine + 2 oxidized [2Fe-2S]-[ferredoxin] + S-adenosyl-L-homocysteine. The catalysed reaction is adenosine(37) in tRNA + 2 reduced [2Fe-2S]-[ferredoxin] + 2 S-adenosyl-L-methionine = 2-methyladenosine(37) in tRNA + 5'-deoxyadenosine + L-methionine + 2 oxidized [2Fe-2S]-[ferredoxin] + S-adenosyl-L-homocysteine. Functionally, specifically methylates position 2 of adenine 2503 in 23S rRNA and position 2 of adenine 37 in tRNAs. m2A2503 modification seems to play a crucial role in the proofreading step occurring at the peptidyl transferase center and thus would serve to optimize ribosomal fidelity. The polypeptide is Dual-specificity RNA methyltransferase RlmN (Phenylobacterium zucineum (strain HLK1)).